The chain runs to 461 residues: CUGBP Elav-like family member 3 (461 aa).

2 RRM domains span residues Ile-7–Ser-88 and Arg-95–Thr-175. The span at Pro-345 to Gln-358 shows a compositional bias: pro residues. A disordered region spans residues Pro-345 to Gly-375. Residues Gln-359–Gln-369 show a composition bias toward low complexity. An RRM 3 domain is found at Cys-376–Pro-454.

The protein belongs to the CELF/BRUNOL family.

The protein resides in the nucleus. It localises to the cytoplasm. In terms of biological role, RNA-binding protein involved in the regulation of pre-mRNA alternative splicing. Mediates exon inclusion and/or exclusion in pre-mRNA that are subject to tissue-specific and developmentally regulated alternative splicing. Specifically activates exon 5 inclusion of cardiac isoforms of TNNT2 during heart remodeling at the juvenile to adult transition. Activates the splicing of MAPT/Tau exon 10. Binds to muscle-specific splicing enhancer (MSE) intronic sites flanking the alternative exon 5 of TNNT2 pre-mRNA. The chain is CUGBP Elav-like family member 3 (CELF3) from Bos taurus (Bovine).